Consider the following 1072-residue polypeptide: DNA-directed RNA polymerase subunit beta (1072 aa).

Belongs to the RNA polymerase beta chain family. In terms of assembly, in plastids the minimal PEP RNA polymerase catalytic core is composed of four subunits: alpha, beta, beta', and beta''. When a (nuclear-encoded) sigma factor is associated with the core the holoenzyme is formed, which can initiate transcription.

Its subcellular location is the plastid. The protein localises to the chloroplast. It catalyses the reaction RNA(n) + a ribonucleoside 5'-triphosphate = RNA(n+1) + diphosphate. Functionally, DNA-dependent RNA polymerase catalyzes the transcription of DNA into RNA using the four ribonucleoside triphosphates as substrates. The chain is DNA-directed RNA polymerase subunit beta from Oenothera elata subsp. hookeri (Hooker's evening primrose).